Reading from the N-terminus, the 216-residue chain is MSSEPFKNVYLLPQTNQLLGLYTIIRDKKTKRPDFVFYSDRIIRLLVEEGLNHLPVTPNTVETDTNQSFDGVSFLGKICGVSIVRAGESMEQGLRDCCRSVRIGKILIQRDEETALPKLFYEKLPDDIADRFVFLLDPMLATGGSAIMATEVLIKRGVKPERIFFLNLICSKEGIENYHAKFPTIKIVTGALDKGLDANRYLIPGLGDFGDRYYCI.

GTP contacts are provided by residues R32, R41, 75–78 (LGKI), and K77. R85 contributes to the 5-phospho-alpha-D-ribose 1-diphosphate binding site. GTP is bound at residue R102. A 5-phospho-alpha-D-ribose 1-diphosphate-binding site is contributed by R110. R131 provides a ligand contact to GTP. 5-phospho-alpha-D-ribose 1-diphosphate contacts are provided by residues D137 and 137 to 145 (DPMLATGGS). Y201 lines the D-ribose 5-phosphate pocket. Uracil contacts are provided by residues L202 and 207–209 (GDF). A 5-phospho-alpha-D-ribose 1-diphosphate-binding site is contributed by D208.

Belongs to the UPRTase family. The cofactor is Mg(2+).

It catalyses the reaction UMP + diphosphate = 5-phospho-alpha-D-ribose 1-diphosphate + uracil. The protein operates within pyrimidine metabolism; UMP biosynthesis via salvage pathway; UMP from uracil: step 1/1. Its activity is regulated as follows. Allosterically activated by GTP. In terms of biological role, catalyzes the conversion of uracil and 5-phospho-alpha-D-ribose 1-diphosphate (PRPP) to UMP and diphosphate. This Lachancea kluyveri (Yeast) protein is Uracil phosphoribosyltransferase (FUR1).